A 417-amino-acid chain; its full sequence is Tol-Pal system protein TolB (417 aa).

The N-terminal stretch at 1-16 is a signal peptide; the sequence is MKYLWLFLIYAIGLFA.

This sequence belongs to the TolB family. The Tol-Pal system is composed of five core proteins: the inner membrane proteins TolA, TolQ and TolR, the periplasmic protein TolB and the outer membrane protein Pal. They form a network linking the inner and outer membranes and the peptidoglycan layer.

The protein resides in the periplasm. Functionally, part of the Tol-Pal system, which plays a role in outer membrane invagination during cell division and is important for maintaining outer membrane integrity. This chain is Tol-Pal system protein TolB, found in Helicobacter pylori (strain J99 / ATCC 700824) (Campylobacter pylori J99).